The following is a 174-amino-acid chain: Rubredoxin-2 (174 aa).

The 53-residue stretch at 1–53 folds into the Rubredoxin-like 1 domain; it reads MAKYQCPDCEYIYDEVAGHPHEGFPPGTSWETIPEEWACPDCAVRDKADFVVI. Positions 6, 9, 39, and 42 each coordinate Fe cation. Positions 56-65 are enriched in low complexity; sequence GSASPASGAA. The disordered stretch occupies residues 56–115; that stretch reads GSASPASGAATPEVRTATTPPKAEASPQKSTGASTPSANNKAKAKAKAKPARAKSSKDST. Positions 97–109 are enriched in basic residues; the sequence is AKAKAKAKPARAK. The Rubredoxin-like 2 domain maps to 121–172; that stretch reads FRKWICITCGHIYDEALGDETEGFAPGTLFEDIPDDWCCPDCGATKEDYVLH. Fe cation is bound by residues cysteine 126, cysteine 129, cysteine 159, and cysteine 162.

It belongs to the rubredoxin family. Fe(3+) is required as a cofactor.

Its subcellular location is the cytoplasm. It functions in the pathway hydrocarbon metabolism; alkane degradation. Involved in the hydrocarbon hydroxylating system, which transfers electrons from NADH to rubredoxin reductase and then through rubredoxin to alkane 1 monooxygenase. The chain is Rubredoxin-2 (alkG) from Alcanivorax borkumensis (strain ATCC 700651 / DSM 11573 / NCIMB 13689 / SK2).